Consider the following 301-residue polypeptide: Porphobilinogen deaminase (301 aa).

An S-(dipyrrolylmethanemethyl)cysteine modification is found at C242.

This sequence belongs to the HMBS family. Monomer. Dipyrromethane is required as a cofactor.

The enzyme catalyses 4 porphobilinogen + H2O = hydroxymethylbilane + 4 NH4(+). Its pathway is porphyrin-containing compound metabolism; protoporphyrin-IX biosynthesis; coproporphyrinogen-III from 5-aminolevulinate: step 2/4. In terms of biological role, tetrapolymerization of the monopyrrole PBG into the hydroxymethylbilane pre-uroporphyrinogen in several discrete steps. This Rickettsia canadensis (strain McKiel) protein is Porphobilinogen deaminase.